A 70-amino-acid chain; its full sequence is Small ribosomal subunit protein bS21B (70 aa).

It belongs to the bacterial ribosomal protein bS21 family.

In Paraburkholderia xenovorans (strain LB400), this protein is Small ribosomal subunit protein bS21B.